Reading from the N-terminus, the 589-residue chain is Protein FAM161B (589 aa).

Disordered stretches follow at residues 1 to 166, 265 to 297, and 386 to 444; these read MTVG…VCSW, KKEQ…RKIP, and AERR…GLAS. Residues 92–106 show a composition bias toward acidic residues; it reads PDSDLNDAEDEEDLE. Polar residues predominate over residues 151–166; that stretch reads TSDSGPPSQHRSVCSW. Basic and acidic residues predominate over residues 265 to 275; sequence KKEQQKEDAPQ. Residues 287 to 297 are compositionally biased toward basic residues; the sequence is SPKKATSRKIP. A compositionally biased stretch (basic and acidic residues) spans 386-396; sequence AERRETRETTR. A coiled-coil region spans residues 510–577; sequence EEVFKAKLKE…ALKQAGLEEE (68 aa).

Belongs to the FAM161 family. As to quaternary structure, interacts with FAM161A.

The protein is Protein FAM161B (Fam161b) of Mus musculus (Mouse).